We begin with the raw amino-acid sequence, 708 residues long: Fatty acid oxidation complex subunit alpha (708 aa).

Residues 1–190 (MDMEKTFNLT…KMGLVDDAVP (190 aa)) form an enoyl-CoA hydratase region. The interval 310 to 708 (QKVNKVMVLG…MAEEGTRFFS (399 aa)) is 3-hydroxyacyl-CoA dehydrogenase.

This sequence in the N-terminal section; belongs to the enoyl-CoA hydratase/isomerase family. In the central section; belongs to the 3-hydroxyacyl-CoA dehydrogenase family. Heterotetramer of two alpha chains (FadJ) and two beta chains (FadI).

The protein localises to the cytoplasm. It catalyses the reaction a (3S)-3-hydroxyacyl-CoA = a (2E)-enoyl-CoA + H2O. It carries out the reaction a 4-saturated-(3S)-3-hydroxyacyl-CoA = a (3E)-enoyl-CoA + H2O. The catalysed reaction is a (3S)-3-hydroxyacyl-CoA + NAD(+) = a 3-oxoacyl-CoA + NADH + H(+). The enzyme catalyses (3S)-3-hydroxybutanoyl-CoA = (3R)-3-hydroxybutanoyl-CoA. The protein operates within lipid metabolism; fatty acid beta-oxidation. Functionally, catalyzes the formation of a hydroxyacyl-CoA by addition of water on enoyl-CoA. Also exhibits 3-hydroxyacyl-CoA epimerase and 3-hydroxyacyl-CoA dehydrogenase activities. This chain is Fatty acid oxidation complex subunit alpha, found in Shewanella halifaxensis (strain HAW-EB4).